We begin with the raw amino-acid sequence, 424 residues long: NuA4 complex subunit EAF3 homolog (424 aa).

One can recognise a Tudor-knot domain in the interval 23 to 73; it reads VDGERVLCFHGPLIYEAKVLKTKPDATPVEYYIHYAGWSKNWDEWVPENRV. Positions 88–243 are disordered; the sequence is ARQCGERSKK…STPTTEPAPC (156 aa). Over residues 97–106 the composition is skewed to basic residues; that stretch reads KDNKKGSAKA. Residues 107 to 116 are compositionally biased toward basic and acidic residues; the sequence is KKMEQMRNES. Ser-119 carries the post-translational modification Phosphoserine. Low complexity predominate over residues 122 to 165; it reads SKDSNTSQSTASSTPTTSAGPGSKSEAGSTGTTTTNSTANSTTS. A phosphothreonine mark is found at Thr-175, Thr-183, Thr-196, and Thr-197. Ser-211 carries the phosphoserine modification. Positions 232 to 242 are enriched in low complexity; it reads TPSTPTTEPAP. Thr-235 carries the phosphothreonine modification. The 173-residue stretch at 252–424 folds into the MRG domain; sequence AKVEVKIKIP…VDPEYVRNAQ (173 aa).

Component of the Tip60 chromatin-remodeling complex which contains the catalytic subunit Tip60 and the subunits Domino, Tra1, Brd8, E(Pc), DMAP1, Pontin, Reptin, Ing3, Act87E, BAP55, Mrg15, MrgBP, Gas41 and YL-1.

It localises to the nucleus. In terms of biological role, part of the Tip60 chromatin-remodeling complex which is involved in DNA repair. Upon induction of DNA double-strand breaks, this complex acetylates phosphorylated H2AV in nucleosomes and exchanges it with unmodified H2AV. The protein is NuA4 complex subunit EAF3 homolog (MRG15) of Drosophila melanogaster (Fruit fly).